The sequence spans 250 residues: Triosephosphate isomerase (250 aa).

Residue 9–11 (NWK) participates in substrate binding. His95 (electrophile) is an active-site residue. Glu167 (proton acceptor) is an active-site residue. Substrate contacts are provided by residues Gly173, Ser213, and 234-235 (GG).

Belongs to the triosephosphate isomerase family. As to quaternary structure, homodimer.

It is found in the cytoplasm. The enzyme catalyses D-glyceraldehyde 3-phosphate = dihydroxyacetone phosphate. It functions in the pathway carbohydrate biosynthesis; gluconeogenesis. It participates in carbohydrate degradation; glycolysis; D-glyceraldehyde 3-phosphate from glycerone phosphate: step 1/1. Functionally, involved in the gluconeogenesis. Catalyzes stereospecifically the conversion of dihydroxyacetone phosphate (DHAP) to D-glyceraldehyde-3-phosphate (G3P). The protein is Triosephosphate isomerase of Flavobacterium johnsoniae (strain ATCC 17061 / DSM 2064 / JCM 8514 / BCRC 14874 / CCUG 350202 / NBRC 14942 / NCIMB 11054 / UW101) (Cytophaga johnsonae).